Here is a 779-residue protein sequence, read N- to C-terminus: Transcription factor SPT20 homolog (779 aa).

The residue at position 296 (Ser296) is a Phosphoserine. Disordered regions lie at residues 373–392 (DEESDSQMSPSHSSTDDHSN) and 420–507 (PVKM…IPRK). Low complexity predominate over residues 424–437 (SHSSSGSASLSQVS). The segment covering 445–454 (TETVSVQSSV) has biased composition (polar residues). A compositionally biased stretch (low complexity) spans 470 to 479 (SSSGNSSSGN). Residue Thr494 is modified to Phosphothreonine. A phosphoserine mark is found at Ser519 and Ser524. Disordered stretches follow at residues 641–677 (QLSQFTPQQPQQPTTCSPQQPGEQGSEQGSTSQEQAL) and 755–779 (LHHHRHTGSQSKSKMKRGTPTTPKF). Positions 755 to 771 (LHHHRHTGSQSKSKMKR) are enriched in basic residues.

The protein belongs to the SPT20 family. In terms of assembly, interacts with MAPK14. Interacts with ATG9A. As to expression, highly expressed in testis, moderately in brain and pituitary gland. Expressed in several fetal tissues, including lung, brain, thymus and kidney. Expression is down-regulated in malignant prostate tissues.

The protein localises to the nucleus. Required for MAP kinase p38 (MAPK11, MAPK12, MAPK13 and/or MAPK14) activation during gastrulation. Required for down-regulation of E-cadherin during gastrulation by regulating E-cadherin protein level downstream from NCK-interacting kinase (NIK) and independently of the regulation of transcription by FGF signaling and Snail. Required for starvation-induced ATG9A trafficking during autophagy. The chain is Transcription factor SPT20 homolog (SUPT20H) from Homo sapiens (Human).